A 607-amino-acid chain; its full sequence is MAGFPGKEAGPPGGWRKCQEDESPENERHENFYAEIDDFAPSVLTPTGSDSGAGEEDDDGLYQVPTHWPPLMAPTGLSGERVPCRTQAAVTSNTGNSPGSRHTSCPFTLPRGAQPPAPAHQKPTAPTPKPRSRECGPSKTPDPFSWFRKTSCTEGGADSTSRSFMYQKGFEEGLAGLGLDDKSDCESEDESNFRRPSSHSALKQKNGGKGKPSGLFEHLAAHGREFSKLSKHAAQLKRLSGSVMNVLNLDDAQDTRQAKAQRKESTRVPIVTHLTNHVPVIKPACSLFLEGAPGVGKTTMLNHLKAVFGDLTIVVPEPMRYWTHVYENAIKAMHKNVTRARHGREDTSAEVLACQMKFTTPFRVLASRKRSLLVTESGARSVAPLDCWILHDRHLLSASVVFPLMLLRSQLLSYSDFIQVLATFTADPGDTIVWMKLNVEENMRRLKKRGRKHESGLDAGYLKSVNDAYHAVYCAWLLTQYFAPEDIVKVCAGLTTITTVCHQSHTPIIRSGVAEKLYKNSIFSVLKEVIQPFRADAVLLEVCLAFTRTLAYLQFVLVDLSEFQDDLPGCWTEIYMQALKNPAIRSQFFDWAGLSKVISDFERGNRD.

Disordered stretches follow at residues 1–160 (MAGF…ADST) and 180–215 (DDKS…PSGL). Over residues 17–32 (KCQEDESPENERHENF) the composition is skewed to basic and acidic residues. Composition is skewed to polar residues over residues 88–106 (AAVT…TSCP), 148–160 (RKTS…ADST), and 194–203 (RRPSSHSALK). An ATP-binding site is contributed by 291 to 298 (GAPGVGKT). Glu-317 serves as the catalytic Proton acceptor. Residue Gln-355 coordinates substrate. Arg-445 lines the ATP pocket. Position 451 (Arg-451) interacts with substrate.

Belongs to the herpesviridae thymidine kinase family. In terms of assembly, homodimer.

Its subcellular location is the virion tegument. The protein resides in the host nucleus. The catalysed reaction is thymidine + ATP = dTMP + ADP + H(+). Catalyzes the transfer of the gamma-phospho group of ATP to thymidine to generate dTMP in the salvage pathway of pyrimidine synthesis. The dTMP serves as a substrate for DNA polymerase during viral DNA replication. Allows the virus to be reactivated and to grow in non-proliferative cells lacking a high concentration of phosphorylated nucleic acid precursors. The polypeptide is Thymidine kinase (Epstein-Barr virus (strain AG876) (HHV-4)).